Reading from the N-terminus, the 119-residue chain is Large ribosomal subunit protein uL18 (119 aa).

The protein belongs to the universal ribosomal protein uL18 family. Part of the 50S ribosomal subunit; part of the 5S rRNA/L5/L18/L25 subcomplex. Contacts the 5S and 23S rRNAs.

Its function is as follows. This is one of the proteins that bind and probably mediate the attachment of the 5S RNA into the large ribosomal subunit, where it forms part of the central protuberance. This is Large ribosomal subunit protein uL18 from Cereibacter sphaeroides (strain ATCC 17029 / ATH 2.4.9) (Rhodobacter sphaeroides).